The primary structure comprises 71 residues: Putative membrane protein insertion efficiency factor (71 aa).

The protein belongs to the UPF0161 family.

It localises to the cell membrane. Its function is as follows. Could be involved in insertion of integral membrane proteins into the membrane. This chain is Putative membrane protein insertion efficiency factor, found in Ruminiclostridium cellulolyticum (strain ATCC 35319 / DSM 5812 / JCM 6584 / H10) (Clostridium cellulolyticum).